Here is a 371-residue protein sequence, read N- to C-terminus: N-acetyllactosaminide alpha-2,3-sialyltransferase (371 aa).

CMP-N-acetyl-beta-neuraminate is bound at residue glycine 255. Aspartate 258 serves as the catalytic Proton acceptor. Residues 278–282 (APHPR), 299–300 (IE), and 322–323 (SG) contribute to the CMP-N-acetyl-beta-neuraminate site. Histidine 280 serves as the catalytic Proton donor.

Belongs to the glycosyltransferase 52 family. In terms of assembly, homodimer.

It localises to the cell outer membrane. It carries out the reaction a beta-D-galactosyl-(1-&gt;4)-N-acetyl-beta-D-glucosaminyl derivative + CMP-N-acetyl-beta-neuraminate = an N-acetyl-alpha-neuraminyl-(2-&gt;3)-beta-D-galactosyl-(1-&gt;4)-N-acetyl-beta-D-glucosaminyl derivative + CMP + H(+). Its pathway is bacterial outer membrane biogenesis; lipooligosaccharide biosynthesis. In terms of biological role, catalyzes the transfer of sialic acid from the substrate CMP-N-acetylneuraminate to the terminal galactose residue of the lacto-N-neotetraose branch of surface lipooligosaccharide (LOS), forming an alpha-2,3-sialyl linkage. Thus, functions in the sialylation of LOS, which plays a role in the evasion of the host immune response by protecting N.meningitidis from complement-mediated serum killing and from phagocytic killing by neutrophils. In Neisseria meningitidis serogroup A / serotype 4A (strain DSM 15465 / Z2491), this protein is N-acetyllactosaminide alpha-2,3-sialyltransferase.